A 190-amino-acid polypeptide reads, in one-letter code: Protein GrpE (190 aa).

The segment at 1-42 (MNEKDNQTTSEPENEQEIIDVNDSGEQPEENETEQPQEEAVE) is disordered. Residues 26–42 (EQPEENETEQPQEEAVE) are compositionally biased toward acidic residues.

The protein belongs to the GrpE family. In terms of assembly, homodimer.

The protein resides in the cytoplasm. Its function is as follows. Participates actively in the response to hyperosmotic and heat shock by preventing the aggregation of stress-denatured proteins, in association with DnaK and GrpE. It is the nucleotide exchange factor for DnaK and may function as a thermosensor. Unfolded proteins bind initially to DnaJ; upon interaction with the DnaJ-bound protein, DnaK hydrolyzes its bound ATP, resulting in the formation of a stable complex. GrpE releases ADP from DnaK; ATP binding to DnaK triggers the release of the substrate protein, thus completing the reaction cycle. Several rounds of ATP-dependent interactions between DnaJ, DnaK and GrpE are required for fully efficient folding. This chain is Protein GrpE, found in Oceanobacillus iheyensis (strain DSM 14371 / CIP 107618 / JCM 11309 / KCTC 3954 / HTE831).